We begin with the raw amino-acid sequence, 399 residues long: S-adenosylmethionine synthase (399 aa).

H15 lines the ATP pocket. D17 is a Mg(2+) binding site. E43 contributes to the K(+) binding site. Residues E56 and Q99 each coordinate L-methionine. The flexible loop stretch occupies residues 99–109 (QSADIAQGVDN). Residues 174–176 (DGK), 244–245 (RF), D253, 259–260 (RK), A276, and K280 each bind ATP. L-methionine is bound at residue D253. K284 serves as a coordination point for L-methionine.

The protein belongs to the AdoMet synthase family. Homotetramer; dimer of dimers. Requires Mg(2+) as cofactor. K(+) is required as a cofactor.

The protein resides in the cytoplasm. It catalyses the reaction L-methionine + ATP + H2O = S-adenosyl-L-methionine + phosphate + diphosphate. It functions in the pathway amino-acid biosynthesis; S-adenosyl-L-methionine biosynthesis; S-adenosyl-L-methionine from L-methionine: step 1/1. Its function is as follows. Catalyzes the formation of S-adenosylmethionine (AdoMet) from methionine and ATP. The overall synthetic reaction is composed of two sequential steps, AdoMet formation and the subsequent tripolyphosphate hydrolysis which occurs prior to release of AdoMet from the enzyme. The protein is S-adenosylmethionine synthase of Salinispora arenicola (strain CNS-205).